The primary structure comprises 247 residues: Probable transcriptional regulatory protein lpp1249 (247 aa).

Belongs to the TACO1 family.

The protein localises to the cytoplasm. This chain is Probable transcriptional regulatory protein lpp1249, found in Legionella pneumophila (strain Paris).